The sequence spans 429 residues: Glutamate-1-semialdehyde 2,1-aminomutase (429 aa).

N6-(pyridoxal phosphate)lysine is present on lysine 265.

It belongs to the class-III pyridoxal-phosphate-dependent aminotransferase family. HemL subfamily. As to quaternary structure, homodimer. Requires pyridoxal 5'-phosphate as cofactor.

It localises to the cytoplasm. The catalysed reaction is (S)-4-amino-5-oxopentanoate = 5-aminolevulinate. Its pathway is porphyrin-containing compound metabolism; protoporphyrin-IX biosynthesis; 5-aminolevulinate from L-glutamyl-tRNA(Glu): step 2/2. The chain is Glutamate-1-semialdehyde 2,1-aminomutase from Ectopseudomonas mendocina (strain ymp) (Pseudomonas mendocina).